We begin with the raw amino-acid sequence, 494 residues long: Cytochrome P450 2A11 (494 aa).

Lys-379 carries the post-translational modification N6-acetyllysine. A heme-binding site is contributed by Cys-439.

The protein belongs to the cytochrome P450 family. Requires heme as cofactor. As to expression, expressed in liver and lung as well as in nasal tissues.

The protein localises to the endoplasmic reticulum membrane. Its subcellular location is the microsome membrane. The enzyme catalyses an organic molecule + reduced [NADPH--hemoprotein reductase] + O2 = an alcohol + oxidized [NADPH--hemoprotein reductase] + H2O + H(+). In terms of biological role, catalyzes the oxygenation of a variety of substrates, including ethanol and procarcinogens such as N-nitrosodiethylamine and phenacetin. Has no or little activity as a coumarin 7-hydroxylase and in the formation of androstenedione from testosterone. The sequence is that of Cytochrome P450 2A11 (CYP2A11) from Oryctolagus cuniculus (Rabbit).